A 284-amino-acid chain; its full sequence is Protein G1-like9 (284 aa).

Residues 1-69 (MEPSPDAPRA…PAAAGLSRYE (69 aa)) form a disordered region. 2 stretches are compositionally biased toward low complexity: residues 13-32 (AEEQ…AASS) and 40-63 (QSQA…PAAA). The region spanning 67 to 194 (RYESQKRRDW…ARGIPYEKKR (128 aa)) is the ALOG domain. The Nuclear localization signal motif lies at 192-196 (KKRKR). The segment at 209–284 (VAPPPVVTAP…SAAKGSATSS (76 aa)) is disordered. The segment covering 246–284 (TTPAASPTTPPATSVGTTTAAATAAAAKGSAAKGSATSS) has biased composition (low complexity).

The protein belongs to the plant homeotic and developmental regulators ALOG protein family.

Its subcellular location is the nucleus. In terms of biological role, probable transcription regulator that acts as a developmental regulator by promoting cell growth in response to light. This Oryza sativa subsp. indica (Rice) protein is Protein G1-like9.